Reading from the N-terminus, the 83-residue chain is Three-finger toxin MALT0052C (83 aa).

The first 21 residues, 1 to 21, serve as a signal peptide directing secretion; it reads MKTLLLTLVVVTIVCLDFGHT. Intrachain disulfides connect Cys-24–Cys-45, Cys-38–Cys-62, Cys-64–Cys-75, and Cys-76–Cys-81.

The protein belongs to the three-finger toxin family. Short-chain subfamily. Type I alpha-neurotoxin sub-subfamily. In terms of tissue distribution, expressed by the venom gland.

Its subcellular location is the secreted. Binds to muscle nicotinic acetylcholine receptor (nAChR) and inhibit acetylcholine from binding to the receptor, thereby impairing neuromuscular transmission. The protein is Three-finger toxin MALT0052C of Micrurus altirostris (Uruguayan coral snake).